Here is a 756-residue protein sequence, read N- to C-terminus: Inactive carboxypeptidase-like protein X2 (756 aa).

Residues 1-25 (MSRPGTATPALALVLLAVTLAGVGA) form the signal peptide. A disordered region spans residues 51 to 131 (EPELETFSPP…DHSVRVARED (81 aa)). Over residues 68–78 (EWERRPQEPRP) the composition is skewed to basic and acidic residues. Residues 79–90 (PKRATKPKKAPK) show a composition bias toward basic residues. Residues 113 to 131 (KSSEKAANDDHSVRVARED) show a composition bias toward basic and acidic residues. Residues 134–293 (ESCPPLGLET…ICMRMEILGC (160 aa)) enclose the F5/8 type C domain. A disulfide bridge links Cys136 with Cys293. Residues Asn231, Asn241, Asn281, Asn337, and Asn491 are each glycosylated (N-linked (GlcNAc...) asparagine). The region spanning 317-640 (KHHNYKEMRQ…ESLIVFMEQV (324 aa)) is the Peptidase M14 domain.

It belongs to the peptidase M14 family.

It is found in the secreted. Its function is as follows. May be involved in cell-cell interactions. This chain is Inactive carboxypeptidase-like protein X2 (CPXM2), found in Homo sapiens (Human).